The primary structure comprises 227 residues: Cytochrome c oxidase subunit 2 (227 aa).

At 1 to 14 the chain is on the mitochondrial intermembrane side; the sequence is MAYPFQLGLQDATS. A helical membrane pass occupies residues 15 to 45; sequence PIMEELLHFHDHTLMIVFLISSLVLYIITLM. Residues 46–59 lie on the Mitochondrial matrix side of the membrane; sequence LTTKLTHTSTMDAQ. Residues 60–87 traverse the membrane as a helical segment; it reads EVETVWTILPAIILVLIALPSLRILYMM. The Mitochondrial intermembrane portion of the chain corresponds to 88-227; sequence DEINNPSLTV…YFETWSALMV (140 aa). Residues histidine 161, cysteine 196, glutamate 198, cysteine 200, histidine 204, and methionine 207 each contribute to the Cu cation site. Glutamate 198 provides a ligand contact to Mg(2+). Tyrosine 218 carries the phosphotyrosine modification.

Belongs to the cytochrome c oxidase subunit 2 family. Component of the cytochrome c oxidase (complex IV, CIV), a multisubunit enzyme composed of 14 subunits. The complex is composed of a catalytic core of 3 subunits MT-CO1, MT-CO2 and MT-CO3, encoded in the mitochondrial DNA, and 11 supernumerary subunits COX4I, COX5A, COX5B, COX6A, COX6B, COX6C, COX7A, COX7B, COX7C, COX8 and NDUFA4, which are encoded in the nuclear genome. The complex exists as a monomer or a dimer and forms supercomplexes (SCs) in the inner mitochondrial membrane with NADH-ubiquinone oxidoreductase (complex I, CI) and ubiquinol-cytochrome c oxidoreductase (cytochrome b-c1 complex, complex III, CIII), resulting in different assemblies (supercomplex SCI(1)III(2)IV(1) and megacomplex MCI(2)III(2)IV(2)). Found in a complex with TMEM177, COA6, COX18, COX20, SCO1 and SCO2. Interacts with TMEM177 in a COX20-dependent manner. Interacts with COX20. Interacts with COX16. The cofactor is Cu cation.

It localises to the mitochondrion inner membrane. The enzyme catalyses 4 Fe(II)-[cytochrome c] + O2 + 8 H(+)(in) = 4 Fe(III)-[cytochrome c] + 2 H2O + 4 H(+)(out). In terms of biological role, component of the cytochrome c oxidase, the last enzyme in the mitochondrial electron transport chain which drives oxidative phosphorylation. The respiratory chain contains 3 multisubunit complexes succinate dehydrogenase (complex II, CII), ubiquinol-cytochrome c oxidoreductase (cytochrome b-c1 complex, complex III, CIII) and cytochrome c oxidase (complex IV, CIV), that cooperate to transfer electrons derived from NADH and succinate to molecular oxygen, creating an electrochemical gradient over the inner membrane that drives transmembrane transport and the ATP synthase. Cytochrome c oxidase is the component of the respiratory chain that catalyzes the reduction of oxygen to water. Electrons originating from reduced cytochrome c in the intermembrane space (IMS) are transferred via the dinuclear copper A center (CU(A)) of subunit 2 and heme A of subunit 1 to the active site in subunit 1, a binuclear center (BNC) formed by heme A3 and copper B (CU(B)). The BNC reduces molecular oxygen to 2 water molecules using 4 electrons from cytochrome c in the IMS and 4 protons from the mitochondrial matrix. The chain is Cytochrome c oxidase subunit 2 (MT-CO2) from Vulpes zerda (Fennec fox).